The chain runs to 722 residues: Methionine--tRNA ligase (722 aa).

The 'HIGH' region signature appears at 11–21; that stretch reads PYANGPIHAGH. 4 residues coordinate Zn(2+): cysteine 143, cysteine 146, cysteine 156, and cysteine 159. Residues 344 to 348 carry the 'KMSKS' region motif; the sequence is KFSTS. Threonine 347 lines the ATP pocket. Residues 622 to 722 form the tRNA-binding domain; the sequence is DFAKLDLRVG…KEVKLGAKVR (101 aa).

The protein belongs to the class-I aminoacyl-tRNA synthetase family. MetG type 1 subfamily. In terms of assembly, homodimer. Zn(2+) is required as a cofactor.

It localises to the cytoplasm. It catalyses the reaction tRNA(Met) + L-methionine + ATP = L-methionyl-tRNA(Met) + AMP + diphosphate. Its function is as follows. Is required not only for elongation of protein synthesis but also for the initiation of all mRNA translation through initiator tRNA(fMet) aminoacylation. This is Methionine--tRNA ligase from Pyrococcus abyssi (strain GE5 / Orsay).